The chain runs to 260 residues: MQRNGLIGDTIRSLGFLSRLPLPQGWFDNTDDSLPRNARAFPLAGGILGLLAGVALLIANAISLPPLAAALIAIGALAAMTGALHEDGLGDTADGFFGASTPDRRLDIMKDSRIGTFAALTLVIWTSVKASLLMAIIARAGAGYALLALIGTEAASRAGMLAFWHALPSARPGGLADSMGQPQWETVVCGCGLGLALLAIGFLPSGGMVALINALVLMTVVLFGFARLCMAKIGGQTGDTLGAAQQIGSLAALIGLVMAL.

The next 7 membrane-spanning stretches (helical) occupy residues 42–62 (PLAG…ANAI), 64–84 (LPPL…TGAL), 117–137 (FAAL…MAII), 144–164 (YALL…LAFW), 192–212 (GLGL…VALI), 214–234 (ALVL…AKIG), and 240–260 (TLGA…VMAL).

Belongs to the CobS family. Requires Mg(2+) as cofactor.

It is found in the cell inner membrane. The catalysed reaction is alpha-ribazole + adenosylcob(III)inamide-GDP = adenosylcob(III)alamin + GMP + H(+). It catalyses the reaction alpha-ribazole 5'-phosphate + adenosylcob(III)inamide-GDP = adenosylcob(III)alamin 5'-phosphate + GMP + H(+). Its pathway is cofactor biosynthesis; adenosylcobalamin biosynthesis; adenosylcobalamin from cob(II)yrinate a,c-diamide: step 7/7. Its function is as follows. Joins adenosylcobinamide-GDP and alpha-ribazole to generate adenosylcobalamin (Ado-cobalamin). Also synthesizes adenosylcobalamin 5'-phosphate from adenosylcobinamide-GDP and alpha-ribazole 5'-phosphate. In Brucella ovis (strain ATCC 25840 / 63/290 / NCTC 10512), this protein is Adenosylcobinamide-GDP ribazoletransferase.